The chain runs to 2036 residues: Putative mediator of RNA polymerase II transcription subunit 24 (2036 aa).

8 disordered regions span residues 51–70, 159–184, 212–451, 501–580, 754–840, 928–1124, 1375–1419, and 1565–1608; these read NNNN…NNNV, DNIE…NNIG, SPSP…QTTT, KSVN…NNNN, NLKN…SHQK, NNNN…NKDL, NNKN…NNNN, and NSSA…NGDT. Positions 212–229 are enriched in low complexity; it reads SPSPSSSSSSSTSPSSQQ. Basic and acidic residues predominate over residues 260-270; it reads EIMKVKEEPIK. 6 stretches are compositionally biased toward low complexity: residues 273–291, 300–311, 387–451, 501–539, 547–580, and 754–770; these read TTTT…STTT, TNGNGEETTITT, QPQP…QTTT, KSVN…NSNN, NNNN…NNNN, and NLKN…NSNG. The stretch at 505 to 584 forms a coiled coil; it reads NNNNNNNNNN…NNNNNNINNI (80 aa). Polar residues predominate over residues 778–787; the sequence is GSSTDGSNKL. Low complexity-rich tracts occupy residues 788–808 and 928–943; these read SSTN…LNGN and NNNN…NNKN. Positions 943–977 form a coiled coil; the sequence is NKNSKKSNNKNKNNKNNNKKNKNNNNNNNNNNNNN. A compositionally biased stretch (basic residues) spans 944 to 964; it reads KNSKKSNNKNKNNKNNNKKNK. Composition is skewed to low complexity over residues 965-999, 1017-1118, 1385-1419, 1565-1584, and 1594-1608; these read NNNN…NNNN, SNNS…NNNN, NSSA…LPKS, and SSNT…NGDT. A coiled-coil region spans residues 1915–1968; the sequence is SKNQSLKKKQKLKQKKQQHNNNNGGEYNIDQDHIEQIQQQQQQYQKQQQQRKDE.

Belongs to the Mediator complex subunit 24 family. As to quaternary structure, component of the Mediator complex.

Its subcellular location is the nucleus. Functionally, component of the Mediator complex, a coactivator involved in the regulated transcription of nearly all RNA polymerase II-dependent genes. Mediator functions as a bridge to convey information from gene-specific regulatory proteins to the basal RNA polymerase II transcription machinery. Mediator is recruited to promoters by direct interactions with regulatory proteins and serves as a scaffold for the assembly of a functional preinitiation complex with RNA polymerase II and the general transcription factors. The chain is Putative mediator of RNA polymerase II transcription subunit 24 (med24) from Dictyostelium discoideum (Social amoeba).